The chain runs to 142 residues: MKFSAAAVLAAAAGAHAWSNVTYTTEIVTAVTTYCPGPTEITHGGNTYTVTEATTLTISDCPCTVTKPIITTSSVICHSCTGYVNSTIPAPTSAGSVGTGSAPAVVTPTVSPSEVPTAGAGKAAALSGAGLVGVLGLAAILL.

This sequence belongs to the SED1 family.

In Neurospora crassa (strain ATCC 24698 / 74-OR23-1A / CBS 708.71 / DSM 1257 / FGSC 987), this protein is Clock-controlled protein 6 (ccg-6).